A 412-amino-acid chain; its full sequence is Type II methyltransferase M.Sau3AI (412 aa).

Positions Ile-4 to Thr-402 constitute an SAM-dependent MTase C5-type domain. Residue Cys-85 is part of the active site.

The protein belongs to the class I-like SAM-binding methyltransferase superfamily. C5-methyltransferase family.

It catalyses the reaction a 2'-deoxycytidine in DNA + S-adenosyl-L-methionine = a 5-methyl-2'-deoxycytidine in DNA + S-adenosyl-L-homocysteine + H(+). Its function is as follows. A methylase that recognizes the double-stranded sequence 5'-GATC-3', methylates C-4 on both strands and protects the DNA from cleavage by the Sau3AI endonuclease. The protein is Type II methyltransferase M.Sau3AI (sau3AIM) of Staphylococcus aureus.